Reading from the N-terminus, the 185-residue chain is Ribose 1,5-bisphosphate phosphokinase PhnN (185 aa).

Residue 10 to 17 participates in ATP binding; it reads GPSGSGKD.

The protein belongs to the ribose 1,5-bisphosphokinase family.

The catalysed reaction is alpha-D-ribose 1,5-bisphosphate + ATP = 5-phospho-alpha-D-ribose 1-diphosphate + ADP. It participates in metabolic intermediate biosynthesis; 5-phospho-alpha-D-ribose 1-diphosphate biosynthesis; 5-phospho-alpha-D-ribose 1-diphosphate from D-ribose 5-phosphate (route II): step 3/3. In terms of biological role, catalyzes the phosphorylation of ribose 1,5-bisphosphate to 5-phospho-D-ribosyl alpha-1-diphosphate (PRPP). The protein is Ribose 1,5-bisphosphate phosphokinase PhnN of Pseudomonas paraeruginosa (strain DSM 24068 / PA7) (Pseudomonas aeruginosa (strain PA7)).